A 261-amino-acid chain; its full sequence is Thiamine thiazole synthase (261 aa).

NAD(+) is bound by residues Ser-40, 59–60 (ER), Gly-67, Val-133, and 159–161 (HVD). Positions 161 and 176 each coordinate Fe cation. Ser-179 and Met-226 together coordinate NAD(+). Glycine is bound at residue Arg-236.

The protein belongs to the THI4 family. In terms of assembly, homooctamer; tetramer of dimers. Fe(2+) serves as cofactor.

The catalysed reaction is hydrogen sulfide + glycine + NAD(+) = ADP-5-ethyl-4-methylthiazole-2-carboxylate + nicotinamide + 3 H2O + H(+). The protein operates within cofactor biosynthesis; thiamine diphosphate biosynthesis. Involved in the biosynthesis of the thiazole moiety of thiamine. Catalyzes the conversion of NAD and glycine to adenosine diphosphate 5-(2-hydroxyethyl)-4-methylthiazole-2-carboxylate (ADT), an adenylated thiazole intermediate, using free sulfide as a source of sulfur. This Methanococcus vannielii (strain ATCC 35089 / DSM 1224 / JCM 13029 / OCM 148 / SB) protein is Thiamine thiazole synthase.